The sequence spans 506 residues: ATP synthase subunit alpha (506 aa).

Position 171–178 (171–178 (GDRKTGKT)) interacts with ATP.

It belongs to the ATPase alpha/beta chains family. F-type ATPases have 2 components, CF(1) - the catalytic core - and CF(0) - the membrane proton channel. CF(1) has five subunits: alpha(3), beta(3), gamma(1), delta(1), epsilon(1). CF(0) has three main subunits: a(1), b(2) and c(9-12). The alpha and beta chains form an alternating ring which encloses part of the gamma chain. CF(1) is attached to CF(0) by a central stalk formed by the gamma and epsilon chains, while a peripheral stalk is formed by the delta and b chains.

The protein resides in the cell inner membrane. It catalyses the reaction ATP + H2O + 4 H(+)(in) = ADP + phosphate + 5 H(+)(out). Its function is as follows. Produces ATP from ADP in the presence of a proton gradient across the membrane. The alpha chain is a regulatory subunit. In Anaplasma phagocytophilum (strain HZ), this protein is ATP synthase subunit alpha.